We begin with the raw amino-acid sequence, 44 residues long: Thymosin beta-12 (44 aa).

Composition is skewed to basic and acidic residues over residues 1–25 (MSDK…ETQE) and 33–44 (ETIEQEKAAATS). Positions 1 to 44 (MSDKPDISEVTSFDKTKLKKTETQEKNPLPSKETIEQEKAAATS) are disordered. S2 carries the post-translational modification N-acetylserine.

The protein belongs to the thymosin beta family.

It is found in the cytoplasm. The protein localises to the cytoskeleton. Functionally, plays an important role in the organization of the cytoskeleton. Binds to and sequesters actin monomers (G actin) and therefore inhibits actin polymerization. In Lateolabrax japonicus (Japanese sea perch), this protein is Thymosin beta-12.